The primary structure comprises 67 residues: Major cold shock protein (67 aa).

One can recognise a CSD domain in the interval 4–63; sequence GTVKWFNAEKGFGFISTENGQDVFAHFSAIQTSGFKTLEEGQKVAFDVEEGQRGPQAVNI.

Homodimer.

The protein localises to the cytoplasm. This Streptococcus pyogenes serotype M6 (strain ATCC BAA-946 / MGAS10394) protein is Major cold shock protein (cspA).